The sequence spans 323 residues: Sphingolipid delta(4)-desaturase/C4-monooxygenase DES2 (323 aa).

A lipid anchor (N-myristoyl glycine) is attached at Gly-2. 2 helical membrane-spanning segments follow: residues 45–65 (WAVL…RGLA) and 68–88 (WLLF…TLAI). Residues 89–93 (HDISH) carry the Histidine box-1 motif. The required for C4-hydroxylase activity stretch occupies residues 95 to 99 (AAFGT). The Histidine box-2 signature appears at 128 to 132 (HVDHH). The helical transmembrane segment at 210-231 (VYLLASSFLGLGLHPISGHFVA) threads the bilayer. Residues 259-263 (HVEHH) carry the Histidine box-3 motif.

It belongs to the fatty acid desaturase type 1 family. DEGS subfamily. As to expression, highly expressed in skin, intestine and kidney.

It is found in the endoplasmic reticulum membrane. It catalyses the reaction a dihydroceramide + 2 Fe(II)-[cytochrome b5] + O2 + 2 H(+) = a phytoceramide + 2 Fe(III)-[cytochrome b5] + H2O. The catalysed reaction is an N-acylsphinganine + 2 Fe(II)-[cytochrome b5] + O2 + 2 H(+) = an N-acylsphing-4-enine + 2 Fe(III)-[cytochrome b5] + 2 H2O. The enzyme catalyses N-octanoylsphinganine + 2 Fe(II)-[cytochrome b5] + O2 + 2 H(+) = N-octanoyl-4-hydroxysphinganine + 2 Fe(III)-[cytochrome b5] + H2O. It carries out the reaction an N-acylsphinganine + 2 Fe(II)-[cytochrome b5] + O2 + 2 H(+) = an N-acyl-(4R)-4-hydroxysphinganine + 2 Fe(III)-[cytochrome b5] + H2O. It functions in the pathway membrane lipid metabolism; sphingolipid biosynthesis. Its function is as follows. Bifunctional enzyme which acts both as a sphingolipid delta(4)-desaturase and a sphingolipid C4-monooxygenase. The sequence is that of Sphingolipid delta(4)-desaturase/C4-monooxygenase DES2 from Homo sapiens (Human).